A 221-amino-acid polypeptide reads, in one-letter code: ATP phosphoribosyltransferase (221 aa).

This sequence belongs to the ATP phosphoribosyltransferase family. Short subfamily. Heteromultimer composed of HisG and HisZ subunits.

Its subcellular location is the cytoplasm. The catalysed reaction is 1-(5-phospho-beta-D-ribosyl)-ATP + diphosphate = 5-phospho-alpha-D-ribose 1-diphosphate + ATP. The protein operates within amino-acid biosynthesis; L-histidine biosynthesis; L-histidine from 5-phospho-alpha-D-ribose 1-diphosphate: step 1/9. In terms of biological role, catalyzes the condensation of ATP and 5-phosphoribose 1-diphosphate to form N'-(5'-phosphoribosyl)-ATP (PR-ATP). Has a crucial role in the pathway because the rate of histidine biosynthesis seems to be controlled primarily by regulation of HisG enzymatic activity. The sequence is that of ATP phosphoribosyltransferase from Anaeromyxobacter dehalogenans (strain 2CP-C).